A 107-amino-acid chain; its full sequence is uncharacterized protein (107 aa).

Residues 86-107 (KRAETARLPAATPQKRTGPARG) form a disordered region.

This is an uncharacterized protein from Saccharomyces cerevisiae (strain ATCC 204508 / S288c) (Baker's yeast).